Here is a 1445-residue protein sequence, read N- to C-terminus: ABC-type transporter FGSG_00046 (1445 aa).

11 helical membrane-spanning segments follow: residues 21 to 41, 77 to 97, 119 to 138, 150 to 170, 187 to 207, 255 to 277, 297 to 317, 368 to 388, 392 to 412, 481 to 501, and 520 to 540; these read LFEE…MLLV, LILW…AAAL, PSSL…VTRV, ISIL…FESL, EIVG…FILG, TLLR…PLLL, YGLI…TALA, LQFV…IFLL, VALG…GTVL, VFST…YVLM, and SLFS…PAIF. The ABC transmembrane type-1 1 domain occupies 259-541; the sequence is GGLCRLFTAL…FLTSVPAIFS (283 aa). Residues 595-821 enclose the ABC transporter 1 domain; it reads IRDGSVRWKG…DEIEASTYSR (227 aa). 627–634 is an ATP binding site; it reads GSVGSGKS. A disordered region spans residues 803–850; sequence RNTQKDMQDDEIEASTYSREQNGPKKQEEDANHESNQSPETSQEHELA. Residues 824–835 are compositionally biased toward basic and acidic residues; the sequence is NGPKKQEEDANH. Transmembrane regions (helical) follow at residues 868–888, 912–932, 1004–1024, 1026–1046, 1116–1136, and 1147–1167; these read GMGF…WQNF, IGVY…VTWF, IPLT…QLVM, SIGT…LAII, LTLV…GVTI, and IGLA…LLTW. The region spanning 974–1173 is the ABC transmembrane type-1 2 domain; that stretch reads HRAPMSYFES…LLTWWTMMEA (200 aa). The region spanning 1210 to 1441 is the ABC transporter 2 domain; that stretch reads IELKELSASY…DVSLFQDLFS (232 aa). 1244–1251 lines the ATP pocket; sequence GRTGSGKT.

This sequence belongs to the ABC transporter superfamily. ABCC family.

Its subcellular location is the cell membrane. Functionally, ABC-type transporter; part of the gene cluster that mediates the biosynthesis of gramillins A and B, bicyclic lipopeptides that induce cell death in maize leaves but not in wheat leaves. May be involved in the secretion of gramillins. The protein is ABC-type transporter FGSG_00046 of Gibberella zeae (strain ATCC MYA-4620 / CBS 123657 / FGSC 9075 / NRRL 31084 / PH-1) (Wheat head blight fungus).